Reading from the N-terminus, the 274-residue chain is Putative homeobox protein Meis3-like 1 (274 aa).

In terms of domain architecture, MEIS N-terminal spans 12–65; it reads GGDVCSSDSFNEDNTAFAKQVRSERPFFSSNPELDNLMIQAIQVLRFHLLELEK. 2 disordered regions span residues 108-167 and 228-248; these read DSGS…KRGI and NRTG…GYTE. Positions 123 to 135 are enriched in polar residues; that stretch reads GLASQSGDNSSDQ. Residues 161–223 constitute a DNA-binding region (homeobox); it reads RNKKRGIFPK…NARRRIVQPM (63 aa).

Belongs to the TALE/MEIS homeobox family.

The protein resides in the nucleus. The polypeptide is Putative homeobox protein Meis3-like 1 (MEIS3P1) (Homo sapiens (Human)).